The chain runs to 137 residues: MLSNPKRTRFRKQHRGRMKGKSFRGNRICFGRYALQALEPAWITARQIEAGRRAITRYARRGGKIWVRIFPDKPVTLRPTETRMGSGKGSPEYWVAVVKPGRILYEMGGVSETVARAAISIAASKMPIRSQFIRLEI.

Belongs to the universal ribosomal protein uL16 family. In terms of assembly, part of the 50S ribosomal subunit.

The protein resides in the plastid. The protein localises to the chloroplast. This is Large ribosomal subunit protein uL16c from Hordeum vulgare (Barley).